The chain runs to 199 residues: Putative inactive ribonuclease 11 (199 aa).

The first 16 residues, 1–16 (METFPLLLLSLGLVLA), serve as a signal peptide directing secretion. The N-linked (GlcNAc...) asparagine glycan is linked to Asn61. His82 functions as the Proton acceptor in the catalytic mechanism. Asn89 and Asn111 each carry an N-linked (GlcNAc...) asparagine glycan. 2 disulfide bridges follow: Cys98/Cys158 and Cys114/Cys169. 115 to 119 (KWSNN) serves as a coordination point for substrate.

The protein belongs to the pancreatic ribonuclease family.

The protein resides in the secreted. This chain is Putative inactive ribonuclease 11 (RNASE11), found in Homo sapiens (Human).